Reading from the N-terminus, the 180-residue chain is Crossover junction endodeoxyribonuclease RuvC (180 aa).

Residues Asp-7, Glu-66, and Asp-138 contribute to the active site. The Mg(2+) site is built by Asp-7, Glu-66, and Asp-138.

It belongs to the RuvC family. In terms of assembly, homodimer which binds Holliday junction (HJ) DNA. The HJ becomes 2-fold symmetrical on binding to RuvC with unstacked arms; it has a different conformation from HJ DNA in complex with RuvA. In the full resolvosome a probable DNA-RuvA(4)-RuvB(12)-RuvC(2) complex forms which resolves the HJ. Mg(2+) is required as a cofactor.

It localises to the cytoplasm. It catalyses the reaction Endonucleolytic cleavage at a junction such as a reciprocal single-stranded crossover between two homologous DNA duplexes (Holliday junction).. In terms of biological role, the RuvA-RuvB-RuvC complex processes Holliday junction (HJ) DNA during genetic recombination and DNA repair. Endonuclease that resolves HJ intermediates. Cleaves cruciform DNA by making single-stranded nicks across the HJ at symmetrical positions within the homologous arms, yielding a 5'-phosphate and a 3'-hydroxyl group; requires a central core of homology in the junction. The consensus cleavage sequence is 5'-(A/T)TT(C/G)-3'. Cleavage occurs on the 3'-side of the TT dinucleotide at the point of strand exchange. HJ branch migration catalyzed by RuvA-RuvB allows RuvC to scan DNA until it finds its consensus sequence, where it cleaves and resolves the cruciform DNA. The chain is Crossover junction endodeoxyribonuclease RuvC from Burkholderia orbicola (strain AU 1054).